A 728-amino-acid chain; its full sequence is Catalase-peroxidase (728 aa).

A disordered region spans residues 1-26; sequence MDNPTDTAGKCPVAHGNKPRGPSNRD. The tryptophyl-tyrosyl-methioninium (Trp-Tyr) (with M-244) cross-link spans 96 to 218; that stretch reads WHSAGTYRIT…LGAVQMGLIY (123 aa). Histidine 97 serves as the catalytic Proton acceptor. Positions 218 to 244 form a cross-link, tryptophyl-tyrosyl-methioninium (Tyr-Met) (with W-96); that stretch reads YVNPEGPNGNPDPVAAARDIRETFARM. A heme b-binding site is contributed by histidine 259.

This sequence belongs to the peroxidase family. Peroxidase/catalase subfamily. In terms of assembly, homodimer or homotetramer. Heme b is required as a cofactor. Post-translationally, formation of the three residue Trp-Tyr-Met cross-link is important for the catalase, but not the peroxidase activity of the enzyme.

It catalyses the reaction H2O2 + AH2 = A + 2 H2O. The catalysed reaction is 2 H2O2 = O2 + 2 H2O. In terms of biological role, bifunctional enzyme with both catalase and broad-spectrum peroxidase activity. Important for stationary phase survival. This is Catalase-peroxidase from Rhizobium etli (strain ATCC 51251 / DSM 11541 / JCM 21823 / NBRC 15573 / CFN 42).